A 303-amino-acid chain; its full sequence is Ribonucleoside-diphosphate reductase small subunit (303 aa).

Residues aspartate 60, glutamate 90, and histidine 93 each contribute to the Fe cation site. Residue tyrosine 97 is part of the active site. The helical transmembrane segment at 147-167 (LLMILIEGIFFASSFASISYL) threads the bilayer. Fe cation is bound by residues glutamate 153, glutamate 187, and histidine 190.

It belongs to the ribonucleoside diphosphate reductase small chain family. In terms of assembly, heterotetramer composed of a homodimer of the large subunit (R1) and a homodimer of the small subunit (R2). Larger multisubunit protein complex are also active, composed of (R1)n(R2)n. Requires Fe cation as cofactor.

The protein localises to the host membrane. It carries out the reaction a 2'-deoxyribonucleoside 5'-diphosphate + [thioredoxin]-disulfide + H2O = a ribonucleoside 5'-diphosphate + [thioredoxin]-dithiol. In terms of biological role, ribonucleoside-diphosphate reductase holoenzyme provides the precursors necessary for viral DNA synthesis. Allows virus growth in non-dividing cells, as well as reactivation from latency in infected hosts. Catalyzes the biosynthesis of deoxyribonucleotides from the corresponding ribonucleotides. The protein is Ribonucleoside-diphosphate reductase small subunit of Suid herpesvirus 1 (strain Kaplan) (SuHV-1).